The primary structure comprises 370 residues: Phosphate acyltransferase (370 aa).

The disordered stretch occupies residues 349 to 370; it reads SAGRAGQDAPDEMAAPGRSEKR.

This sequence belongs to the PlsX family. In terms of assembly, homodimer. Probably interacts with PlsY.

It is found in the cytoplasm. The enzyme catalyses a fatty acyl-[ACP] + phosphate = an acyl phosphate + holo-[ACP]. The protein operates within lipid metabolism; phospholipid metabolism. Catalyzes the reversible formation of acyl-phosphate (acyl-PO(4)) from acyl-[acyl-carrier-protein] (acyl-ACP). This enzyme utilizes acyl-ACP as fatty acyl donor, but not acyl-CoA. The polypeptide is Phosphate acyltransferase (Cereibacter sphaeroides (strain ATCC 17029 / ATH 2.4.9) (Rhodobacter sphaeroides)).